The chain runs to 309 residues: Aspartate carbamoyltransferase catalytic subunit (309 aa).

Residues Arg-55 and Thr-56 each contribute to the carbamoyl phosphate site. An L-aspartate-binding site is contributed by Lys-85. Carbamoyl phosphate is bound by residues Arg-106, His-135, and Gln-138. Arg-168 and Arg-230 together coordinate L-aspartate. Carbamoyl phosphate-binding residues include Leu-268 and Pro-269.

Belongs to the aspartate/ornithine carbamoyltransferase superfamily. ATCase family. Heterododecamer (2C3:3R2) of six catalytic PyrB chains organized as two trimers (C3), and six regulatory PyrI chains organized as three dimers (R2).

The enzyme catalyses carbamoyl phosphate + L-aspartate = N-carbamoyl-L-aspartate + phosphate + H(+). It functions in the pathway pyrimidine metabolism; UMP biosynthesis via de novo pathway; (S)-dihydroorotate from bicarbonate: step 2/3. Functionally, catalyzes the condensation of carbamoyl phosphate and aspartate to form carbamoyl aspartate and inorganic phosphate, the committed step in the de novo pyrimidine nucleotide biosynthesis pathway. The chain is Aspartate carbamoyltransferase catalytic subunit from Vibrio vulnificus (strain CMCP6).